Consider the following 457-residue polypeptide: Chromosomal replication initiator protein DnaA (457 aa).

A domain I, interacts with DnaA modulators region spans residues 1–75; the sequence is MDAQLNNLWE…ALKIVTSRKF (75 aa). The interval 75-118 is domain II; sequence FKIEFYLESDLEEEKENEEKQKEEKKENTNDVDGSIVVSDEMSA. The tract at residues 119–335 is domain III, AAA+ region; that stretch reads TLNPKYTFQS…GALIRIIAYS (217 aa). 4 residues coordinate ATP: G163, G165, K166, and T167. The segment at 336 to 457 is domain IV, binds dsDNA; sequence SLTNRDVSVD…NDITKKLTQK (122 aa).

It belongs to the DnaA family. Oligomerizes as a right-handed, spiral filament on DNA at oriC.

It is found in the cytoplasm. Its function is as follows. Plays an essential role in the initiation and regulation of chromosomal replication. ATP-DnaA binds to the origin of replication (oriC) to initiate formation of the DNA replication initiation complex once per cell cycle. Binds the DnaA box (a 9 base pair repeat at the origin) and separates the double-stranded (ds)DNA. Forms a right-handed helical filament on oriC DNA; dsDNA binds to the exterior of the filament while single-stranded (ss)DNA is stabiized in the filament's interior. The ATP-DnaA-oriC complex binds and stabilizes one strand of the AT-rich DNA unwinding element (DUE), permitting loading of DNA polymerase. After initiation quickly degrades to an ADP-DnaA complex that is not apt for DNA replication. Binds acidic phospholipids. The chain is Chromosomal replication initiator protein DnaA from Clostridium perfringens (strain ATCC 13124 / DSM 756 / JCM 1290 / NCIMB 6125 / NCTC 8237 / Type A).